A 372-amino-acid chain; its full sequence is GTPase Obg (372 aa).

The Obg domain occupies 1–159 (MKFIDEARIE…RMLKLELKVL (159 aa)). The interval 128–147 (LHFKSSTNRAPRQKTDGKPG) is disordered. An OBG-type G domain is found at 160 to 334 (ADVGLLGMPN…LVYAIYDYLA (175 aa)). GTP contacts are provided by residues 166–173 (GMPNAGKS), 191–195 (FTTLA), 213–216 (DIPG), 284–287 (NKLD), and 315–317 (SAL). Positions 173 and 193 each coordinate Mg(2+).

Belongs to the TRAFAC class OBG-HflX-like GTPase superfamily. OBG GTPase family. Monomer. It depends on Mg(2+) as a cofactor.

It localises to the cytoplasm. Its function is as follows. An essential GTPase which binds GTP, GDP and possibly (p)ppGpp with moderate affinity, with high nucleotide exchange rates and a fairly low GTP hydrolysis rate. Plays a role in control of the cell cycle, stress response, ribosome biogenesis and in those bacteria that undergo differentiation, in morphogenesis control. The sequence is that of GTPase Obg from Burkholderia thailandensis (strain ATCC 700388 / DSM 13276 / CCUG 48851 / CIP 106301 / E264).